A 688-amino-acid polypeptide reads, in one-letter code: Translation initiation factor IF-2 (688 aa).

Over residues 50–62 (LLSGKEKSEKTKE) the composition is skewed to basic and acidic residues. Positions 50–95 (LLSGKEKSEKTKEEDDEIETTAKNPIKESINNKKSNKRDDKNEKVN) are disordered. The segment covering 72–82 (KNPIKESINNK) has biased composition (low complexity). The span at 86 to 95 (KRDDKNEKVN) shows a compositional bias: basic and acidic residues. Residues 187 to 354 (KRSPIITVMG…MILLSSEILE (168 aa)) form the tr-type G domain. The interval 196–203 (GHVDHGKT) is G1. GTP is bound at residue 196–203 (GHVDHGKT). The interval 221-225 (GITQH) is G2. The tract at residues 242 to 245 (DTPG) is G3. GTP-binding positions include 242–246 (DTPGH) and 296–299 (NKID). The G4 stretch occupies residues 296-299 (NKID). Residues 332–334 (SAH) are G5.

It belongs to the TRAFAC class translation factor GTPase superfamily. Classic translation factor GTPase family. IF-2 subfamily.

The protein resides in the cytoplasm. In terms of biological role, one of the essential components for the initiation of protein synthesis. Protects formylmethionyl-tRNA from spontaneous hydrolysis and promotes its binding to the 30S ribosomal subunits. Also involved in the hydrolysis of GTP during the formation of the 70S ribosomal complex. In Clostridium botulinum (strain Langeland / NCTC 10281 / Type F), this protein is Translation initiation factor IF-2.